The following is a 268-amino-acid chain: Helix-loop-helix protein 25 (268 aa).

Residues 1 to 23 (MPKVIQSSMSDYRSVPYNQTPKS) show a composition bias toward polar residues. A disordered region spans residues 1–29 (MPKVIQSSMSDYRSVPYNQTPKSASERKR). The segment at 92–105 (ERRKVKTEREKIRR) is basic motif. One can recognise a bHLH domain in the interval 92 to 149 (ERRKVKTEREKIRRKKQDDCYAELKFFILNKQMGSYEQRLKLERITILEIIIDYIKHN). The helix-loop-helix motif stretch occupies residues 106-149 (KKQDDCYAELKFFILNKQMGSYEQRLKLERITILEIIIDYIKHN).

Its subcellular location is the nucleus. Functionally, probable transcription factor. Modulates lifespan and also recovery from the developmentally arrested larval state known as dauer, perhaps acting upstream of phosphatase PTEN/daf-18. Regulates expression of genes involved in cell division, cell-cycle regulation, and sexual reproduction, including daf-18. The polypeptide is Helix-loop-helix protein 25 (Caenorhabditis elegans).